The following is an 88-amino-acid chain: RQC P-site tRNA stabilizing factor (88 aa).

The S4 RNA-binding domain occupies 1 to 67 (MRLDKFLKVS…VEITNVKETV (67 aa)).

It belongs to the RqcP family. Associates with stalled 50S ribosomal subunits. Binds to RqcH, 23S rRNA and the P-site tRNA. Does not require RqcH for association with 50S subunits.

Its function is as follows. Key component of the ribosome quality control system (RQC), a ribosome-associated complex that mediates the extraction of incompletely synthesized nascent chains from stalled ribosomes and their subsequent degradation. RqcH recruits Ala-charged tRNA, and with RqcP directs the elongation of stalled nascent chains on 50S ribosomal subunits, leading to non-templated C-terminal alanine extensions (Ala tail). The Ala tail promotes nascent chain degradation. RqcP is associated with the translocation-like movement of the peptidyl-tRNA from the A-site into the P-site. This is RQC P-site tRNA stabilizing factor from Halalkalibacterium halodurans (strain ATCC BAA-125 / DSM 18197 / FERM 7344 / JCM 9153 / C-125) (Bacillus halodurans).